Consider the following 639-residue polypeptide: MKDITKQKFSRNKLVEMISFALGNLGHAAFYGALSTYFIVYVTSGMFDGLPQSVANKLIGLITALVVIIRLAEVIIDPILGNIVDNTKTRWGKFKPWQVIGAVVSSVLLVVIFTGIFGLAHINWIAFAIVFTVLFILLDIFYSFADVAYWGMVPAISEDSKERGIFTSLGSFTGSIGWNGLTMIVVPVTTYFTFIATGKHEQGPSGWFGFSIVVSIVAVLSALAVAFGTKEKDNLIRNAATKKTSIKDVFSGIIHNDQILWISLAYLMYSLAYVVTNGVLFYFFKFVLGKPNEFWIAGAIATVIGFSTAPLYPVLNKFITRKVLFSIGQMAMILSYLFFIFGKTNMMMVTIGLILFNFTFAQLVVVLSLTDSIEYGQLKNGNRNEAVVLAVRPMLDKITGAFSNGLVGAIAITAGMTGSATAGDISASKINTFEIYAFYTPLLFSILALVIFLWKVKITEKKHAEIVIELEKTLSSGAKKANTSEVNVELEEIFAPASGQKKLLNEVDGNTLTGIGFAIDPEEGNLFAPFDGKVDFTFSTKHVLGVVSNNGLKAIIHVGIGTINMRGAGFVSHYVDGQLFKKGDLLMTFDKKLITKNGYQDDIIMYFTQPENIIDVQQIDNRVVKQGEKIAKLTFRSER.

The tract at residues 1–473 is permease; the sequence is MKDITKQKFS…AEIVIELEKT (473 aa). 12 helical membrane-spanning segments follow: residues 20 to 40, 59 to 79, 99 to 119, 124 to 144, 176 to 196, 207 to 227, 264 to 284, 294 to 314, 322 to 342, 347 to 367, 398 to 418, and 433 to 453; these read FALG…YFIV, IGLI…IDPI, VIGA…IFGL, WIAF…FYSF, IGWN…TFIA, WFGF…AVAF, LAYL…FYFF, FWIA…LYPV, KVLF…FIFG, MMVT…VVVL, ITGA…GMTG, and FEIY…VIFL. One can recognise a PTS EIIA type-1 domain in the interval 505–609; sequence NEVDGNTLTG…QDDIIMYFTQ (105 aa). His-557 carries the phosphohistidine; by HPr modification.

This sequence in the N-terminal section; belongs to the sodium:galactoside symporter (TC 2.A.2) family.

It is found in the cell membrane. Its function is as follows. Responsible for transport of beta-galactosides into the cell, with the concomitant uptake of protons (symport system), and also for transport of homologous and heterologous exchange of beta-galactosides. The sequence is that of Lactose permease (lacS) from Leuconostoc lactis.